Reading from the N-terminus, the 953-residue chain is Ubiquitin carboxyl-terminal hydrolase CYLD (953 aa).

Residues 106-590 are interaction with TRIP; it reads CEERFSLFKN…FEIMIGKKKG (485 aa). 2 consecutive CAP-Gly domains span residues 153–198 and 253–286; these read LAER…VFVA and DVLP…VQLC. 2 disordered regions span residues 313 to 349 and 384 to 410; these read PPKL…RNRS and SLTE…LSSE. Residues 337–346 show a composition bias toward polar residues; it reads TGSTSDPGTR. Phosphoserine is present on residues Ser-384, Ser-415, and Ser-419. The segment at 391-466 is interaction with TRAF2; it reads DFGHASPPLQ…LAVSSGNSHG (76 aa). Residues 467–681 are interaction with IKBKG/NEMO; the sequence is LEVGSLAEVK…FTSEEKDPEE (215 aa). The CAP-Gly 3 domain occupies 489–532; sequence GQPPGLNEVLAGLELEDECAGCTDGTFRGTRYFTCALKKALFVK. Positions 589–947 constitute a USP domain; the sequence is KGIQGHYNSC…DAYMCMYQSP (359 aa). Cys-598 functions as the Nucleophile in the catalytic mechanism. Positions 778–830 are B-box; the sequence is LEDTPRQCRICGGLAMYECRECYDDPDISAGKIKQFCKTCNAQVHLHPKRLNH. Cys-785, Cys-788, Cys-796, Cys-799, Cys-814, Cys-817, His-822, and His-830 together coordinate Zn(2+). His-868 acts as the Proton acceptor in catalysis.

The protein belongs to the peptidase C19 family. As to quaternary structure, interacts (via CAP-Gly domain) with IKBKG/NEMO (via proline-rich C-terminal region). Interacts with TRAF2 and TRIP. Interacts with PLK1, DVL1, DVL3, MAVS, TBK1, IKKE and RIGI. Interacts (via CAP-Gly domain) with microtubules. Interacts with HDAC6 and BCL3. Interacts with MAP3K7. Identified in a complex with TRAF6 and SQSTM1. Interacts with OPTN and SQSTM1. Interacts with CEP350. Interacts with RNF31; the interaction is indirect and is mediated via SPATA2. Interacts with SPATA2 (via the PUB domain); the interaction is direct and recruits CYLD to the LUBAC complex, thereby regulating TNF-alpha-induced necroptosis. Post-translationally, phosphorylated on several serine residues by IKKA and/or IKKB in response to immune stimuli. Phosphorylation requires IKBKG. Phosphorylation abolishes TRAF2 deubiquitination, interferes with the activation of Jun kinases, and strongly reduces CD40-dependent gene activation by NF-kappa-B. Ubiquitinated. Polyubiquitinated in hepatocytes treated with palmitic acid. Ubiquitination is mediated by E3 ligase TRIM47 and leads to proteasomal degradation.

Its subcellular location is the cytoplasm. It is found in the perinuclear region. It localises to the cytoskeleton. The protein resides in the cell membrane. The protein localises to the microtubule organizing center. Its subcellular location is the centrosome. It is found in the spindle. It localises to the cilium basal body. The catalysed reaction is Thiol-dependent hydrolysis of ester, thioester, amide, peptide and isopeptide bonds formed by the C-terminal Gly of ubiquitin (a 76-residue protein attached to proteins as an intracellular targeting signal).. Its function is as follows. Deubiquitinase that specifically cleaves 'Lys-63'- and linear 'Met-1'-linked polyubiquitin chains and is involved in NF-kappa-B activation and TNF-alpha-induced necroptosis. Negatively regulates NF-kappa-B activation by deubiquitinating upstream signaling factors. Contributes to the regulation of cell survival, proliferation and differentiation via its effects on NF-kappa-B activation. Negative regulator of Wnt signaling. Inhibits HDAC6 and thereby promotes acetylation of alpha-tubulin and stabilization of microtubules. Plays a role in the regulation of microtubule dynamics, and thereby contributes to the regulation of cell proliferation, cell polarization, cell migration, and angiogenesis. Required for normal cell cycle progress and normal cytokinesis. Inhibits nuclear translocation of NF-kappa-B. Plays a role in the regulation of inflammation and the innate immune response, via its effects on NF-kappa-B activation. Dispensable for the maturation of intrathymic natural killer cells, but required for the continued survival of immature natural killer cells. Negatively regulates TNFRSF11A signaling and osteoclastogenesis. Involved in the regulation of ciliogenesis, allowing ciliary basal bodies to migrate and dock to the plasma membrane; this process does not depend on NF-kappa-B activation. Ability to remove linear ('Met-1'-linked) polyubiquitin chains regulates innate immunity and TNF-alpha-induced necroptosis: recruited to the LUBAC complex via interaction with SPATA2 and restricts linear polyubiquitin formation on target proteins. Regulates innate immunity by restricting linear polyubiquitin formation on RIPK2 in response to NOD2 stimulation. Involved in TNF-alpha-induced necroptosis by removing linear ('Met-1'-linked) polyubiquitin chains from RIPK1, thereby regulating the kinase activity of RIPK1. Negatively regulates intestinal inflammation by removing 'Lys-63' linked polyubiquitin chain of NLRP6, thereby reducing the interaction between NLRP6 and PYCARD/ASC and formation of the NLRP6 inflammasome. Does not catalyze deubiquitination of heterotypic 'Lys-63'-/'Lys-48'-linked branched ubiquitin chains. Removes 'Lys-63' linked polyubiquitin chain of MAP3K7, which inhibits phosphorylation and blocks downstream activation of the JNK-p38 kinase cascades. Also removes 'Lys-63'-linked polyubiquitin chains of MAP3K1 and MA3P3K3, which inhibit their interaction with MAP2K1 and MAP2K2. In Bos taurus (Bovine), this protein is Ubiquitin carboxyl-terminal hydrolase CYLD (CYLD).